The sequence spans 546 residues: Glutamate--tRNA ligase (546 aa).

Positions P41–G51 match the 'HIGH' region motif. The 'KMSKS' region signature appears at K293 to R297. Residue K296 coordinates ATP.

This sequence belongs to the class-I aminoacyl-tRNA synthetase family. Glutamate--tRNA ligase type 1 subfamily. Monomer.

The protein resides in the cytoplasm. The enzyme catalyses tRNA(Glu) + L-glutamate + ATP = L-glutamyl-tRNA(Glu) + AMP + diphosphate. Catalyzes the attachment of glutamate to tRNA(Glu) in a two-step reaction: glutamate is first activated by ATP to form Glu-AMP and then transferred to the acceptor end of tRNA(Glu). The polypeptide is Glutamate--tRNA ligase (Clostridium perfringens (strain 13 / Type A)).